The primary structure comprises 383 residues: Putative [LysW]-aminoadipate semialdehyde/glutamate semialdehyde transaminase (383 aa).

Pyridoxal 5'-phosphate-binding positions include Gly97–Thr98 and Phe124. Arg127 is a substrate binding site. Asp209–Gln212 contributes to the pyridoxal 5'-phosphate binding site. Lys238 is modified (N6-(pyridoxal phosphate)lysine). Ser266 is a substrate binding site. Residue Thr267 coordinates pyridoxal 5'-phosphate.

The protein belongs to the class-III pyridoxal-phosphate-dependent aminotransferase family. LysJ subfamily. As to quaternary structure, homodimer. Requires pyridoxal 5'-phosphate as cofactor.

It localises to the cytoplasm. The enzyme catalyses [amino-group carrier protein]-C-terminal-gamma-(L-lysyl)-L-glutamate + 2-oxoglutarate = [amino-group carrier protein]-C-terminal-N-(1-carboxy-5-oxopentan-1-yl)-L-glutamine + L-glutamate. It catalyses the reaction [amino-group carrier protein]-C-terminal-gamma-(L-ornithyl)-L-glutamate + 2-oxoglutarate = [amino-group carrier protein]-C-terminal-gamma-(L-glutamyl-5-semialdehyde)-L-glutamate + L-glutamate. It participates in amino-acid biosynthesis; L-lysine biosynthesis via AAA pathway; L-lysine from L-alpha-aminoadipate (Thermus route): step 4/5. The protein operates within amino-acid biosynthesis; L-arginine biosynthesis. Its function is as follows. Involved in both the arginine and lysine biosynthetic pathways. This chain is Putative [LysW]-aminoadipate semialdehyde/glutamate semialdehyde transaminase, found in Pyrobaculum aerophilum (strain ATCC 51768 / DSM 7523 / JCM 9630 / CIP 104966 / NBRC 100827 / IM2).